The following is a 100-amino-acid chain: uncharacterized protein (100 aa).

The 93-residue stretch at 8-100 folds into the HTH arsR-type domain; that stretch reads MKQSDDQIRA…TYLPGFLETL (93 aa). The H-T-H motif DNA-binding region spans 44–67; sequence CGEVGEKCNIVKTTASYHFKTLRE.

This is an uncharacterized protein from Bacillus subtilis (strain 168).